The sequence spans 96 residues: Histone-like protein p6 (96 aa).

A DNA-binding region spans residues methionine 1 to methionine 19.

It belongs to the phi29likevirus histone-like protein p6 family. Homodimer. Homomultimer. Binds to double-stranded DNA giving rise to multimeric nucleoprotein complexes. Binding specificity for the viral DNA is based on supercoiling, the viral genome having a negative superhelicity lower than that of plasmid DNA. Interacts with the DNA replication protein p17; this interaction optimizes the binding of protein p6 at the viral DNA ends, thus favoring the initiation of replication.

In terms of biological role, histone-like nucleoprotein that binds to the viral dsDNA and responsible for wrapping and compacting the viral DNA about 4-fold. Forms a nucleoprotein complex in which the DNA adopts a right-handed toroidal conformation winding around a protein core. Binds ito most, if not all, the viral genome, although with different affinity, the highest one corresponding to the genome ends. The formation of the nucleoprotein complex at the genome ends, activates the initiation of viral DNA replication. The binding of p6 would recruit the complex formed by the TP and the DNA polymerase to the origin. Protein p6 also represses early transcription from promoter C2, and, together with protein p4, represses transcription from promoters A2b and A2c and activates late transcription from promoter A3. Protein p6 is therefore involved in the early to late transcription switch. The formation of the nucleoprotein complex at the right end of the phage genome where the early promoter C2 is located affects local topology, which may contribute to the promoter repression. This is Histone-like protein p6 (6) from Bacillus phage PZA (Bacteriophage PZA).